The chain runs to 463 residues: MTQDGTWVDESDWQLDDSEIAESGAAPVVAVVGRPNVGKSTLVNRILGRREAVVQDIPGVTRDRVCYDALWTGRRFVVQDTGGWEPNAKGLQRLVAEQASVAMRTADAVILVVDAGVGATAADEAAARILLRSGKPVFLAANKVDSEKGESDAAALWSLGLGEPHAISAMHGRGVADLLDGVLAALPEVGESASASGGPRRVALVGKPNVGKSSLLNKLAGDQRSVVHEAAGTTVDPVDSLIELGGDVWRFVDTAGLRRKVGQASGHEFYASVRTHAAIDSAEVAIVLIDASQPLTEQDLRVISMVIEAGRALVLAYNKWDLVDEDRRELLQREIDRELVQVRWAQRVNISAKTGRAVHKLVPAMEDALASWDTRIATGPLNTWLTEVTAATPPPVRGGKQPRILFATQATARPPTFVLFTTGFLEAGYRRFLERRLRETFGFDGSPIRVNVRVREKRAGKRR.

2 EngA-type G domains span residues 27–190 (PVVA…PEVG) and 200–373 (RRVA…ASWD). GTP-binding positions include 33 to 40 (GRPNVGKS), 80 to 84 (DTGGW), 142 to 145 (NKVD), 206 to 213 (GKPNVGKS), 253 to 257 (DTAGL), and 318 to 321 (NKWD). A KH-like domain is found at 374 to 456 (TRIATGPLNT…PIRVNVRVRE (83 aa)).

Belongs to the TRAFAC class TrmE-Era-EngA-EngB-Septin-like GTPase superfamily. EngA (Der) GTPase family. Associates with the 50S ribosomal subunit.

GTPase that plays an essential role in the late steps of ribosome biogenesis. This chain is GTPase Der, found in Mycobacterium bovis (strain ATCC BAA-935 / AF2122/97).